The sequence spans 1249 residues: Pleckstrin homology-like domain family B member 2 (1249 aa).

Disordered stretches follow at residues glutamine 64–leucine 85 and aspartate 128–asparagine 154. 2 positions are modified to phosphoserine: serine 71 and serine 73. Positions proline 74–serine 84 are enriched in polar residues. Positions aspartate 128–glutamate 143 are enriched in basic and acidic residues. A phosphoserine mark is found at serine 156, serine 203, serine 241, and serine 244. 2 disordered regions span residues serine 190 to methionine 248 and asparagine 264 to aspartate 289. Positions glutamate 231 to methionine 248 are enriched in polar residues. Positions serine 267–glycine 283 are enriched in low complexity. Phosphoserine occurs at positions 329, 333, 347, 380, 383, 389, 411, 416, 465, 486, and 510. Residues aspartate 388–tyrosine 424 form a disordered region. Threonine 546 and threonine 570 each carry phosphothreonine. 2 coiled-coil regions span residues threonine 580–cysteine 692 and phenylalanine 718–leucine 803. Residues valine 866–valine 934 are disordered. Over residues glutamate 873–glycine 888 the composition is skewed to basic and acidic residues. Threonine 894 is modified (phosphothreonine). Polar residues predominate over residues threonine 901–proline 919. The stretch at isoleucine 1028–isoleucine 1094 forms a coiled coil. The 104-residue stretch at glutamate 1139–glutamate 1242 folds into the PH domain.

As to quaternary structure, interacts with FLNC. Interacts with AMOTL2; interaction may facilitate PHLDB2 localization to the myotube podosome cortex that surrounds the core. Part of a cortical microtubule stabilization complex (CMSC) composed of KANK1, PPFIA1, PPFIBP1, ERC1/ELKS, PHLDB2/LL5beta, CLASPs, KIF21A and possibly additional interactors; within CMSCs KANK1 and PHLDB2/LL5beta appear to be the core components for targeting of microtubule-binding proteins KIF21A and CLASPs, whereas PPFIA1, PPFIBP1 and ERC1/ELKS serve as scaffolds for protein clustering. In terms of tissue distribution, expressed at postsynaptic membranes of skeletal neuromuscular junctions (at protein level).

It is found in the cytoplasm. The protein localises to the membrane. Its subcellular location is the cell projection. It localises to the podosome. The protein resides in the cell cortex. Seems to be involved in the assembly of the postsynaptic apparatus. May play a role in acetyl-choline receptor (AChR) aggregation in the postsynaptic membrane. This is Pleckstrin homology-like domain family B member 2 (Phldb2) from Mus musculus (Mouse).